Consider the following 963-residue polypeptide: MWCLHCNSERTQSLLELELDSGVEGEAPSSETGTSLDSPSAYPQGPLVPGSSLSPDHYEHTSVGAYGLYSGPPGQQQRTRRPKLQHSTSILRKQAEEEAIKRSRSLSESYELSSDLQDKQVEMLERKYGGRLVTRHAARTIQTAFRQYQMNKNFERLRSSMSENRMSRRIVLSNMRMQFSFEGPEKVHSSYFEGKQVSVTNDGSQLGALVSPECGDLSEPTTLKSPAPSSDFADAITELEDAFSRQVKSLAESIDDALNCRSLHTEEAPALDAARARDTEPQTALHGMDHRKLDEMTASYSDVTLYIDEEELSPPLPLSQAGDRPSSTESDLRLRAGGAAPDYWALAHKEDKADTDTSCRSTPSLERQEQRLRVEHLPLLTIEPPSDSSVDLSDRSERGSLKRQSAYERSLGGQQGSPKHGPHSGAPKSLPREEPELRPRPPRPLDSHLAINGSANRQSKSESDYSDGDNDSINSTSNSNDTINCSSESSSRDSLREQTLSKQTYHKEARNSWDSPAFSNDVIRKRHYRIGLNLFNKKPEKGVQYLIERGFVPDTPVGVAHFLLQRKGLSRQMIGEFLGNRQKQFNRDVLDCVVDEMDFSTMELDEALRKFQAHIRVQGEAQKVERLIEAFSQRYCICNPGVVRQFRNPDTIFILAFAIILLNTDMYSPNVKPERKMKLEDFIKNLRGVDDGEDIPREMLMGIYERIRKRELKTNEDHVSQVQKVEKLIVGKKPIGSLHPGLGCVLSLPHRRLVCYCRLFEVPDPNKPQKLGLHQREIFLFNDLLVVTKIFQKKKNSVTYSFRQSFSLYGMQVLLFENQYYPNGIRLTSSVPGADIKVLINFNAPNPQDRKKFTDDLRESIAEVQEMEKHRIESELEKQKGVVRPSMSQCSSLKKESGNGTLSRACLDDSYASGEGLKRSALSSSLRDLSEAGKRGRRSSAGSLESNVEFQPFEPLQPSVLCS.

The tract at residues 21-88 is disordered; it reads SGVEGEAPSS…TRRPKLQHST (68 aa). The span at 29 to 38 shows a compositional bias: polar residues; that stretch reads SSETGTSLDS. Residues Ser89, Ser105, and Ser107 each carry the phosphoserine modification. The IQ domain occupies 134–163; sequence TRHAARTIQTAFRQYQMNKNFERLRSSMSE. A phosphoserine mark is found at Ser180, Ser249, and Ser253. Disordered regions lie at residues 312-332 and 349-513; these read LSPP…ESDL and KEDK…RNSW. 2 stretches are compositionally biased toward basic and acidic residues: residues 366–376 and 430–446; these read ERQEQRLRVEH and LPRE…RPLD. Low complexity predominate over residues 471 to 489; sequence DSINSTSNSNDTINCSSES. 2 positions are modified to phosphoserine: Ser512 and Ser515. The 194-residue stretch at 517-710 folds into the SEC7 domain; it reads AFSNDVIRKR…MGIYERIRKR (194 aa). The 93-residue stretch at 774–866 folds into the PH domain; sequence HQREIFLFND…LRESIAEVQE (93 aa). The stretch at 848–879 forms a coiled coil; the sequence is QDRKKFTDDLRESIAEVQEMEKHRIESELEKQ. The residue at position 892 (Ser892) is a Phosphoserine. Position 911 is a phosphotyrosine (Tyr911). Positions 922–947 are disordered; it reads LSSSLRDLSEAGKRGRRSSAGSLESN. Phosphoserine is present on residues Ser924 and Ser925.

The protein belongs to the BRAG family. In terms of assembly, interacts with ARF1 and ARF6. Interacts with GRIA2; the interaction is required for ARF6 activation. As to expression, expressed in brain, ovary, heart, lung, liver, kidney and leukocytes. Moderate expression was also detected in lung, skeletal muscle, placenta, small intestine, pancreas, spleen and testis.

It is found in the cytoplasm. It localises to the nucleus. The protein localises to the postsynaptic density. Its subcellular location is the cytoplasmic vesicle. The protein resides in the secretory vesicle. It is found in the synaptic vesicle. In terms of biological role, guanine nucleotide exchange factor for ARF1 and ARF6. Guanine nucleotide exchange factor activity is enhanced by lipid binding. Accelerates GTP binding by ARFs of all three classes. Guanine nucleotide exchange protein for ARF6, mediating internalization of beta-1 integrin. Involved in neuronal development. In neurons, plays a role in the control of vesicle formation by endocytoc cargo. Upon long term depression, interacts with GRIA2 and mediates the activation of ARF6 to internalize synaptic AMPAR receptors. The polypeptide is IQ motif and SEC7 domain-containing protein 1 (Homo sapiens (Human)).